A 502-amino-acid polypeptide reads, in one-letter code: Cytochrome c-552 (502 aa).

The N-terminal stretch at 1-25 (MKYLTKSRVIATIAMLGCLSVSAWA) is a signal peptide. Position 105 (His-105) interacts with heme c. The heme site is built by Cys-133, Cys-136, and Lys-137. Residues Cys-171, Cys-174, His-175, Cys-220, Cys-223, and His-224 each coordinate heme c. 4 residues coordinate Ca(2+): Glu-226, Tyr-227, Lys-271, and Gln-273. Tyr-227 provides a ligand contact to substrate. A substrate-binding site is contributed by His-274. Residues His-285, Cys-292, Cys-295, His-296, His-311, Cys-324, Cys-327, His-328, and His-403 each contribute to the heme c site. Positions 481–502 (RERGLLPEVTPKSVTTPKVDAK) are disordered.

This sequence belongs to the cytochrome c-552 family. Requires Ca(2+) as cofactor. It depends on heme c as a cofactor.

It localises to the periplasm. The enzyme catalyses 6 Fe(III)-[cytochrome c] + NH4(+) + 2 H2O = 6 Fe(II)-[cytochrome c] + nitrite + 8 H(+). It participates in nitrogen metabolism; nitrate reduction (assimilation). Catalyzes the reduction of nitrite to ammonia, consuming six electrons in the process. This chain is Cytochrome c-552, found in Haemophilus ducreyi (strain 35000HP / ATCC 700724).